The following is a 449-amino-acid chain: Putative F-box/FBD/LRR-repeat protein At5g62970 (449 aa).

Residues 2–50 (DKISGFSDDELLVKILSFLPFKFAITTSVLSKQWKFLWMRVPKLEYDED) enclose the F-box domain. 6 LRR repeats span residues 27–52 (TTSV…EDSM), 81–107 (GHRM…RLKF), 158–185 (TLKL…HLER), 186–211 (VTYG…VVEL), 252–279 (YFKL…NITA), and 328–354 (IHNA…EFDE). Positions 368–418 (FWNQPNSVPQCLLSTLQTFEWSGYPGSVQGKDLATYILRKSRQLKIATISI) constitute an FBD domain.

The sequence is that of Putative F-box/FBD/LRR-repeat protein At5g62970 from Arabidopsis thaliana (Mouse-ear cress).